The sequence spans 133 residues: MNHTVQTFFSPVNSGQPPNYEMLKEEHKVAVLGVPHNPAPPTSTVIHIRSKTSVPHHVVWSLFNTLFMNPCCLGFIAFAYSVKSRDRKMVGNVTGAQAYASTTKCLNIWALILGILMTILLIIIPVLIFQAHR.

The Extracellular segment spans residues 1–57; that stretch reads MNHTVQTFFSPVNSGQPPNYEMLKEEHKVAVLGVPHNPAPPTSTVIHIRSKTSVPHH. K24 participates in a covalent cross-link: Glycyl lysine isopeptide (Lys-Gly) (interchain with G-Cter in ubiquitin). A helical membrane pass occupies residues 58–78; sequence VVWSLFNTLFMNPCCLGFIAF. Residues 79–107 lie on the Cytoplasmic side of the membrane; sequence AYSVKSRDRKMVGNVTGAQAYASTTKCLN. Glycyl lysine isopeptide (Lys-Gly) (interchain with G-Cter in ubiquitin) cross-links involve residues K83, K88, and K104. The chain crosses the membrane as a helical span at residues 108 to 128; it reads IWALILGILMTILLIIIPVLI. Residues 129–133 are Extracellular-facing; it reads FQAHR.

It belongs to the CD225/Dispanin family.

It is found in the membrane. The polypeptide is Putative dispanin subfamily A member 2d (Homo sapiens (Human)).